The primary structure comprises 196 residues: Phosphoheptose isomerase (196 aa).

In terms of domain architecture, SIS spans 36–196 (MTNCLINGGK…GIDALLLGVE (161 aa)). Residue 51 to 53 (NGG) coordinates substrate. 2 residues coordinate Zn(2+): His60 and Glu64. Residues Glu64, 93-94 (ND), 119-121 (STS), Ser124, and Gln174 contribute to the substrate site. Positions 174 and 182 each coordinate Zn(2+).

It belongs to the SIS family. GmhA subfamily. In terms of assembly, homotetramer. Zn(2+) is required as a cofactor.

It is found in the cytoplasm. It carries out the reaction 2 D-sedoheptulose 7-phosphate = D-glycero-alpha-D-manno-heptose 7-phosphate + D-glycero-beta-D-manno-heptose 7-phosphate. It participates in carbohydrate biosynthesis; D-glycero-D-manno-heptose 7-phosphate biosynthesis; D-glycero-alpha-D-manno-heptose 7-phosphate and D-glycero-beta-D-manno-heptose 7-phosphate from sedoheptulose 7-phosphate: step 1/1. Catalyzes the isomerization of sedoheptulose 7-phosphate in D-glycero-D-manno-heptose 7-phosphate. In Dechloromonas aromatica (strain RCB), this protein is Phosphoheptose isomerase.